We begin with the raw amino-acid sequence, 122 residues long: MALNIENIVAELETATILELSELVKAIEEKFDVSAAAPVAVAGPAAGGAAEEQTEFTVELTAAGDQKVKVIKAVREATGLGLKEAKAVVDGAPAPVKEAVSKEEAEALKAALEEVGASVTVK.

It belongs to the bacterial ribosomal protein bL12 family. In terms of assembly, homodimer. Part of the ribosomal stalk of the 50S ribosomal subunit. Forms a multimeric L10(L12)X complex, where L10 forms an elongated spine to which 2 to 4 L12 dimers bind in a sequential fashion. Binds GTP-bound translation factors.

Functionally, forms part of the ribosomal stalk which helps the ribosome interact with GTP-bound translation factors. Is thus essential for accurate translation. This Enterococcus faecalis (strain ATCC 700802 / V583) protein is Large ribosomal subunit protein bL12.